We begin with the raw amino-acid sequence, 1859 residues long: DNA-directed RNA polymerase subunit beta'' (1859 aa).

Residues cysteine 286, cysteine 359, cysteine 366, and cysteine 369 each contribute to the Zn(2+) site.

The protein belongs to the RNA polymerase beta' chain family. RpoC2 subfamily. In terms of assembly, in plastids the minimal PEP RNA polymerase catalytic core is composed of four subunits: alpha, beta, beta', and beta''. When a (nuclear-encoded) sigma factor is associated with the core the holoenzyme is formed, which can initiate transcription. Requires Zn(2+) as cofactor.

It is found in the plastid. The protein resides in the chloroplast. The enzyme catalyses RNA(n) + a ribonucleoside 5'-triphosphate = RNA(n+1) + diphosphate. In terms of biological role, DNA-dependent RNA polymerase catalyzes the transcription of DNA into RNA using the four ribonucleoside triphosphates as substrates. The polypeptide is DNA-directed RNA polymerase subunit beta'' (Oltmannsiellopsis viridis (Marine flagellate)).